We begin with the raw amino-acid sequence, 501 residues long: Glycerol kinase (501 aa).

Thr-14 contributes to the ADP binding site. ATP contacts are provided by Thr-14, Thr-15, and Ser-16. Thr-14 is a binding site for sn-glycerol 3-phosphate. Arg-18 is an ADP binding site. Residues Arg-84, Glu-85, Tyr-135, and Asp-244 each contribute to the sn-glycerol 3-phosphate site. 5 residues coordinate glycerol: Arg-84, Glu-85, Tyr-135, Asp-244, and Gln-245. Positions 266 and 309 each coordinate ADP. Thr-266, Gly-309, Gln-313, and Gly-410 together coordinate ATP. Residues Gly-410 and Asn-414 each contribute to the ADP site.

It belongs to the FGGY kinase family.

The catalysed reaction is glycerol + ATP = sn-glycerol 3-phosphate + ADP + H(+). The protein operates within polyol metabolism; glycerol degradation via glycerol kinase pathway; sn-glycerol 3-phosphate from glycerol: step 1/1. Its activity is regulated as follows. Inhibited by fructose 1,6-bisphosphate (FBP). Its function is as follows. Key enzyme in the regulation of glycerol uptake and metabolism. Catalyzes the phosphorylation of glycerol to yield sn-glycerol 3-phosphate. In Deinococcus radiodurans (strain ATCC 13939 / DSM 20539 / JCM 16871 / CCUG 27074 / LMG 4051 / NBRC 15346 / NCIMB 9279 / VKM B-1422 / R1), this protein is Glycerol kinase.